A 509-amino-acid polypeptide reads, in one-letter code: Maturase K (509 aa).

Belongs to the intron maturase 2 family. MatK subfamily.

Its subcellular location is the plastid. The protein localises to the chloroplast. Functionally, usually encoded in the trnK tRNA gene intron. Probably assists in splicing its own and other chloroplast group II introns. The protein is Maturase K of Nicotiana acuminata (Acuminate tobacco).